Consider the following 372-residue polypeptide: Cytoplasmic tRNA 2-thiolation protein 1 (372 aa).

A disordered region spans residues 335-372; it reads GKKEDGGCGSGGGGCGCAGAADETENEETRKRLKDLQF. The span at 341 to 351 shows a compositional bias: gly residues; it reads GCGSGGGGCGC. Over residues 361-372 the composition is skewed to basic and acidic residues; the sequence is EETRKRLKDLQF.

The protein belongs to the TtcA family. CTU1/NCS6/ATPBD3 subfamily.

The protein localises to the cytoplasm. The protein operates within tRNA modification; 5-methoxycarbonylmethyl-2-thiouridine-tRNA biosynthesis. Its function is as follows. Plays a central role in 2-thiolation of mcm(5)S(2)U at tRNA wobble positions of tRNA(Lys), tRNA(Glu) and tRNA(Gln). Directly binds tRNAs and probably acts by catalyzing adenylation of tRNAs, an intermediate required for 2-thiolation. It is unclear whether it acts as a sulfurtransferase that transfers sulfur from thiocarboxylated URM1 onto the uridine of tRNAs at wobble position. This chain is Cytoplasmic tRNA 2-thiolation protein 1, found in Caenorhabditis briggsae.